The following is an 867-amino-acid chain: Putative ribosome biogenesis ATPase nvl (867 aa).

The interval 70 to 203 (LSSCESSENE…NNNNGNNKDN (134 aa)) is disordered. Over residues 110–122 (EQLTSQYKQNIKN) the composition is skewed to polar residues. 3 stretches are compositionally biased toward low complexity: residues 123-132 (TPPTTTTTTP), 141-172 (IPSN…TPNS), and 180-203 (NSSN…NKDN). 257 to 264 (GPSGCGKT) provides a ligand contact to ATP. Residues 351–370 (SSNNSTNEPNEQTEQQQQQQ) are disordered. An ATP-binding site is contributed by 607 to 614 (GPPGCGKT). Over residues 834–843 (DINKSRDKKP) the composition is skewed to basic and acidic residues. The disordered stretch occupies residues 834–855 (DINKSRDKKPNNSNNIPITNNI). Low complexity predominate over residues 844–855 (NNSNNIPITNNI).

It belongs to the AAA ATPase family.

It localises to the nucleus. It is found in the nucleolus. The protein localises to the nucleoplasm. Involved in ribosome biogenesis. This chain is Putative ribosome biogenesis ATPase nvl (nvl), found in Dictyostelium discoideum (Social amoeba).